The sequence spans 306 residues: uncharacterized protein (306 aa).

9 consecutive transmembrane segments (helical) span residues 13 to 33, 53 to 73, 86 to 106, 112 to 132, 147 to 167, 177 to 197, 214 to 234, 246 to 268, and 272 to 294; these read VLLSQFLNGYEWAVPWIFAFI, PLPMILALFVLHIFMPLFAWG, ITGLTLAVVIPTGITSLIWAA, VGLTLSIILVDTVLSPLIVPL, WGMMKGLIVMVVIPSFLGMLF, AFVSSALSPFSKLCLMAVIAI, AGIAVTVFFIALTGYAAAWLI, VSLIFTGGMRNISAGAVLAVTFF, and VAVPVVIGMLFQQILAALFGYML.

The protein localises to the cell membrane. This is an uncharacterized protein from Bacillus subtilis (strain 168).